Here is a 168-residue protein sequence, read N- to C-terminus: Crossover junction endodeoxyribonuclease RuvC (168 aa).

Residues Asp10, Glu70, and Asp143 contribute to the active site. Positions 10, 70, and 143 each coordinate Mg(2+).

This sequence belongs to the RuvC family. In terms of assembly, homodimer which binds Holliday junction (HJ) DNA. The HJ becomes 2-fold symmetrical on binding to RuvC with unstacked arms; it has a different conformation from HJ DNA in complex with RuvA. In the full resolvosome a probable DNA-RuvA(4)-RuvB(12)-RuvC(2) complex forms which resolves the HJ. Mg(2+) is required as a cofactor.

Its subcellular location is the cytoplasm. It carries out the reaction Endonucleolytic cleavage at a junction such as a reciprocal single-stranded crossover between two homologous DNA duplexes (Holliday junction).. Its function is as follows. The RuvA-RuvB-RuvC complex processes Holliday junction (HJ) DNA during genetic recombination and DNA repair. Endonuclease that resolves HJ intermediates. Cleaves cruciform DNA by making single-stranded nicks across the HJ at symmetrical positions within the homologous arms, yielding a 5'-phosphate and a 3'-hydroxyl group; requires a central core of homology in the junction. The consensus cleavage sequence is 5'-(A/T)TT(C/G)-3'. Cleavage occurs on the 3'-side of the TT dinucleotide at the point of strand exchange. HJ branch migration catalyzed by RuvA-RuvB allows RuvC to scan DNA until it finds its consensus sequence, where it cleaves and resolves the cruciform DNA. The protein is Crossover junction endodeoxyribonuclease RuvC of Roseiflexus sp. (strain RS-1).